The following is a 487-amino-acid chain: DNA ligase (487 aa).

Catalysis depends on Lys-159, which acts as the N6-AMP-lysine intermediate. Arg-164, Arg-182, and Glu-217 together coordinate ATP. Glu-217 contacts a divalent metal cation. Positions 229–237 (EGLDFLFDA) are interaction with the sliding clamp. Glu-344 is a binding site for a divalent metal cation. ATP is bound by residues Arg-359 and Lys-365.

This sequence belongs to the ATP-dependent DNA ligase family. Interacts with the sliding clamp. The cofactor is a divalent metal cation.

The catalysed reaction is ATP + (deoxyribonucleotide)n-3'-hydroxyl + 5'-phospho-(deoxyribonucleotide)m = (deoxyribonucleotide)n+m + AMP + diphosphate.. Functionally, DNA ligase, which is expressed in the early stage of lytic development, has been implicated in T4 DNA synthesis and genetic recombination. It may also play a role in T4 DNA repair. The chain is DNA ligase (30) from Enterobacteria phage T4 (Bacteriophage T4).